The sequence spans 264 residues: ATP synthase subunit a (264 aa).

Helical transmembrane passes span 39–59, 97–117, 139–159, 205–225, and 239–259; these read LDTL…FYIV, VAPL…MDLV, TADP…VIFY, LFGN…LPWW, and LLVI…YISL.

This sequence belongs to the ATPase A chain family. In terms of assembly, F-type ATPases have 2 components, CF(1) - the catalytic core - and CF(0) - the membrane proton channel. CF(1) has five subunits: alpha(3), beta(3), gamma(1), delta(1), epsilon(1). CF(0) has three main subunits: a(1), b(2) and c(9-12). The alpha and beta chains form an alternating ring which encloses part of the gamma chain. CF(1) is attached to CF(0) by a central stalk formed by the gamma and epsilon chains, while a peripheral stalk is formed by the delta and b chains.

It localises to the cell inner membrane. Its function is as follows. Key component of the proton channel; it plays a direct role in the translocation of protons across the membrane. The sequence is that of ATP synthase subunit a from Coxiella burnetii (strain Dugway 5J108-111).